The sequence spans 476 residues: Stromelysin-2 (476 aa).

A signal peptide spans 1-17 (MEPLAILVLLCFPICSA). A propeptide spans 18–99 (YPLHGAVRQD…PRCGVPDVGG (82 aa)) (activation peptide). The Cysteine switch signature appears at 90-97 (PRCGVPDV). Residues Cys92, His168, Asp170, His183, His196, and His218 each coordinate Zn(2+). Glu219 is a catalytic residue. Zn(2+)-binding residues include His222 and His228. Hemopexin repeat units follow at residues 286–335 (PVKC…WPSL), 336–382 (PSGL…GFPP), 384–432 (VKKI…FPGI), and 433–476 (EPQV…WLLC). A disulfide bond links Cys289 and Cys476.

The protein belongs to the peptidase M10A family. Zn(2+) serves as cofactor. Ca(2+) is required as a cofactor.

Its subcellular location is the secreted. It localises to the extracellular space. It is found in the extracellular matrix. The catalysed reaction is Similar to stromelysin 1, but action on collagen types III, IV and V is weak.. Its function is as follows. Can degrade fibronectin, gelatins of type I, III, IV, and V; weakly collagens III, IV, and V. Activates procollagenase. In Rattus norvegicus (Rat), this protein is Stromelysin-2 (Mmp10).